The chain runs to 396 residues: Elongation factor Tu (396 aa).

Residues 10–206 (KPHCNIGTIG…EVDAYIPQPE (197 aa)) form the tr-type G domain. The G1 stretch occupies residues 19–26 (GHVDHGKT). 19-26 (GHVDHGKT) contributes to the GTP binding site. Thr-26 serves as a coordination point for Mg(2+). The segment at 60–64 (GITIS) is G2. Positions 81–84 (DCPG) are G3. GTP is bound by residues 81-85 (DCPGH) and 136-139 (NKCD). The tract at residues 136-139 (NKCD) is G4. Positions 174-176 (SAL) are G5.

Belongs to the TRAFAC class translation factor GTPase superfamily. Classic translation factor GTPase family. EF-Tu/EF-1A subfamily. As to quaternary structure, monomer.

The protein resides in the cytoplasm. It catalyses the reaction GTP + H2O = GDP + phosphate + H(+). In terms of biological role, GTP hydrolase that promotes the GTP-dependent binding of aminoacyl-tRNA to the A-site of ribosomes during protein biosynthesis. The sequence is that of Elongation factor Tu from Paramagnetospirillum magneticum (strain ATCC 700264 / AMB-1) (Magnetospirillum magneticum).